Here is a 350-residue protein sequence, read N- to C-terminus: Renin receptor (350 aa).

The N-terminal stretch at 1 to 16 (MAVFVVLLALVAGVLG) is a signal peptide. The Extracellular portion of the chain corresponds to 17–302 (NEFSILKSPG…YNLAYKYNFE (286 aa)). The chain crosses the membrane as a helical span at residues 303–323 (YSVVFNMVLWIMIALALAVII). Topologically, residues 324 to 350 (TSYNIWNMDPGYDSIIYRMTNQKIRMD) are cytoplasmic. Positions 346–350 (KIRMD) match the Mediates retrograde transport to the ER motif.

In terms of assembly, interacts with renin. Accessory component of the multisubunit proton-transporting vacuolar (V)-ATPase protein pump. Interacts (via N-terminus) with ATP6AP1 (via N-terminus). Interacts with ATP6V0D1; ATP6V0D1 is a V-ATPase complex subunit and the interaction promotes V-ATPase complex assembly. Interacts with TMEM9; TMEM9 is a V-ATPase assembly regulator and the interaction induces the interaction with ATP6V0D1. Interacts with VMA21 (via N-terminus); VMA21 is a V-ATPase accessory component. Phosphorylated. Post-translationally, proteolytically cleaved by a furin-like convertase in the trans-Golgi network to generate N- and C-terminal fragments. As to expression, expressed in brain, heart, placenta, liver, kidney and pancreas. Barely detectable in lung and skeletal muscles. In the kidney cortex it is restricted to the mesangium of glomeruli. In the coronary and kidney artery it is expressed in the subendothelium, associated to smooth muscles where it colocalizes with REN. Expressed in vascular structures and by syncytiotrophoblast cells in the mature fetal placenta.

The protein localises to the endoplasmic reticulum membrane. Its subcellular location is the lysosome membrane. It localises to the cytoplasmic vesicle. It is found in the autophagosome membrane. The protein resides in the cell projection. The protein localises to the dendritic spine membrane. Its subcellular location is the axon. It localises to the endosome membrane. It is found in the clathrin-coated vesicle membrane. The protein resides in the secretory vesicle. The protein localises to the synaptic vesicle membrane. Its function is as follows. Multifunctional protein which functions as a renin, prorenin cellular receptor and is involved in the assembly of the lysosomal proton-transporting V-type ATPase (V-ATPase) and the acidification of the endo-lysosomal system. May mediate renin-dependent cellular responses by activating ERK1 and ERK2. By increasing the catalytic efficiency of renin in AGT/angiotensinogen conversion to angiotensin I, may also play a role in the renin-angiotensin system (RAS). Through its function in V-type ATPase (v-ATPase) assembly and acidification of the lysosome it regulates protein degradation and may control different signaling pathways important for proper brain development, synapse morphology and synaptic transmission. In Homo sapiens (Human), this protein is Renin receptor.